Consider the following 533-residue polypeptide: Sterol 26-hydroxylase, mitochondrial (533 aa).

Residues 1–32 (MAVLSRMRLRWALLDTRVMGHGLCPQGARAKA) constitute a mitochondrion transit peptide. The tract at residues 38–58 (LRDHESTEGPGTGQDRPRLRS) is disordered. Residues Lys-142 and Lys-375 each carry the N6-acetyllysine modification. A sterol-binding region spans residues 386–400 (PLLKAVIKETLRLYP). Cys-479 contacts heme. N6-acetyllysine is present on residues Lys-512 and Lys-523.

It belongs to the cytochrome P450 family. Interacts with HSP70; this interaction is required for initial targeting to mitochondria. The cofactor is heme. As to expression, expressed in liver, kidney and ovary.

Its subcellular location is the mitochondrion inner membrane. It catalyses the reaction 5beta-cholestane-3alpha,7alpha,12alpha-triol + 6 reduced [adrenodoxin] + 3 O2 + 5 H(+) = (25R)-3alpha,7alpha,12alpha-trihydroxy-5beta-cholestan-26-oate + 6 oxidized [adrenodoxin] + 4 H2O. It carries out the reaction cholestanol + 2 reduced [adrenodoxin] + O2 + 2 H(+) = (25R)-26-hydroxycholestanol + 2 oxidized [adrenodoxin] + H2O. The enzyme catalyses (25R)-3beta-hydroxycholest-5-en-7-one-26-al + 2 reduced [adrenodoxin] + O2 + H(+) = (25R)-3beta-hydroxycholest-5-en-7-one-26-oate + 2 oxidized [adrenodoxin] + H2O. The catalysed reaction is (25R)-3beta,26-dihydroxycholest-5-en-7-one + 2 reduced [adrenodoxin] + O2 + 2 H(+) = (25R)-3beta-hydroxycholest-5-en-7-one-26-al + 2 oxidized [adrenodoxin] + 2 H2O. It catalyses the reaction 7-oxocholesterol + 2 reduced [adrenodoxin] + O2 + 2 H(+) = (25R)-3beta,26-dihydroxycholest-5-en-7-one + 2 oxidized [adrenodoxin] + H2O. It carries out the reaction calciol + 2 reduced [adrenodoxin] + O2 + 2 H(+) = calcidiol + 2 oxidized [adrenodoxin] + H2O. The enzyme catalyses (25R)-5beta-cholestane-3alpha,7alpha,12alpha,26-tetrol + 2 reduced [adrenodoxin] + O2 + 2 H(+) = (25R)-3alpha,7alpha,12alpha-trihydroxy-5beta-cholestan-26-al + 2 oxidized [adrenodoxin] + 2 H2O. The catalysed reaction is 2 reduced [adrenodoxin] + cholesterol + O2 + 2 H(+) = (25R)-cholest-5-ene-3beta,26-diol + 2 oxidized [adrenodoxin] + H2O. It catalyses the reaction (25R)-3beta,4beta-dihydroxycholest-5-en-26-al + 2 reduced [adrenodoxin] + O2 + H(+) = (25R)-3beta,4beta-dihydroxycholest-5-en-26-oate + 2 oxidized [adrenodoxin] + H2O. It carries out the reaction (25R)-4beta,26-dihydroxycholesterol + 2 reduced [adrenodoxin] + O2 + 2 H(+) = (25R)-3beta,4beta-dihydroxycholest-5-en-26-al + 2 oxidized [adrenodoxin] + 2 H2O. The enzyme catalyses 4beta-hydroxycholesterol + 2 reduced [adrenodoxin] + O2 + 2 H(+) = (25R)-4beta,26-dihydroxycholesterol + 2 oxidized [adrenodoxin] + H2O. The catalysed reaction is (25R)-3beta-hydroxy-5-cholesten-26-al + 2 reduced [adrenodoxin] + O2 + H(+) = (25R)-3beta-hydroxy-5-cholestenoate + 2 oxidized [adrenodoxin] + H2O. It catalyses the reaction (25R)-cholest-5-ene-3beta,26-diol + 2 reduced [adrenodoxin] + O2 + 2 H(+) = (25R)-3beta-hydroxy-5-cholesten-26-al + 2 oxidized [adrenodoxin] + 2 H2O. It carries out the reaction (25R)-3alpha,7alpha,12alpha-trihydroxy-5beta-cholestan-26-al + 2 reduced [adrenodoxin] + O2 + H(+) = (25R)-3alpha,7alpha,12alpha-trihydroxy-5beta-cholestan-26-oate + 2 oxidized [adrenodoxin] + H2O. The enzyme catalyses 5beta-cholestane-3alpha,7alpha,12alpha-triol + 2 reduced [adrenodoxin] + O2 + 2 H(+) = (25R)-5beta-cholestane-3alpha,7alpha,12alpha,26-tetrol + 2 oxidized [adrenodoxin] + H2O. Its pathway is hormone biosynthesis; cholecalciferol biosynthesis. It participates in steroid metabolism; cholesterol degradation. It functions in the pathway lipid metabolism; bile acid biosynthesis. Cytochrome P450 monooxygenase that catalyzes regio- and stereospecific hydroxylation of cholesterol and its derivatives. Hydroxylates (with R stereochemistry) the terminal methyl group of cholesterol side-chain in a three step reaction to yield at first a C26 alcohol, then a C26 aldehyde and finally a C26 acid. Regulates cholesterol homeostasis by catalyzing the conversion of excess cholesterol to bile acids via both the 'neutral' (classic) and the 'acid' (alternative) pathways. May also regulate cholesterol homeostasis via generation of active oxysterols, which act as ligands for NR1H2 and NR1H3 nuclear receptors, modulating the transcription of genes involved in lipid metabolism. Plays a role in cholestanol metabolism in the cerebellum. Similarly to cholesterol, hydroxylates cholestanol and may facilitate sterol diffusion through the blood-brain barrier to the systemic circulation for further degradation. Also hydroxylates retinal 7-ketocholesterol, a noxious oxysterol with pro-inflammatory and pro-apoptotic effects, and may play a role in its elimination from the retinal pigment epithelium. May play a redundant role in vitamin D biosynthesis. Catalyzes 25-hydroxylation of vitamin D3 that is required for its conversion to a functionally active form. The protein is Sterol 26-hydroxylase, mitochondrial (Cyp27a1) of Rattus norvegicus (Rat).